Consider the following 215-residue polypeptide: Large ribosomal subunit protein bL25 (215 aa).

The segment covering 1 to 10 (MAKSASNQLR) has biased composition (polar residues). Disordered regions lie at residues 1–25 (MAKS…SRRA) and 187–215 (ELEG…GESE).

This sequence belongs to the bacterial ribosomal protein bL25 family. CTC subfamily. As to quaternary structure, part of the 50S ribosomal subunit; part of the 5S rRNA/L5/L18/L25 subcomplex. Contacts the 5S rRNA. Binds to the 5S rRNA independently of L5 and L18.

In terms of biological role, this is one of the proteins that binds to the 5S RNA in the ribosome where it forms part of the central protuberance. This is Large ribosomal subunit protein bL25 from Mycobacterium bovis (strain ATCC BAA-935 / AF2122/97).